The chain runs to 306 residues: Putative type I specificity subunit S.MpnORF285P (306 aa).

Belongs to the type-I restriction system S methylase family. As to quaternary structure, the methyltransferase is composed of M and S polypeptides.

Its function is as follows. The specificity (S) subunit of a type I methyltransferase (MTase); this subunit dictates DNA sequence specificity. The single R subunit has multiple frameshifts and is probably not expressed. The sequence is that of Putative type I specificity subunit S.MpnORF285P from Mycoplasma pneumoniae (strain ATCC 29342 / M129 / Subtype 1) (Mycoplasmoides pneumoniae).